Here is a 332-residue protein sequence, read N- to C-terminus: 4-hydroxy-3-methylbut-2-enyl diphosphate reductase (332 aa).

Residue C34 coordinates [4Fe-4S] cluster. (2E)-4-hydroxy-3-methylbut-2-enyl diphosphate contacts are provided by H63 and H96. Residues H63 and H96 each coordinate dimethylallyl diphosphate. Isopentenyl diphosphate is bound by residues H63 and H96. [4Fe-4S] cluster is bound at residue C118. H146 contacts (2E)-4-hydroxy-3-methylbut-2-enyl diphosphate. H146 is a binding site for dimethylallyl diphosphate. H146 is an isopentenyl diphosphate binding site. The Proton donor role is filled by E148. T186 provides a ligand contact to (2E)-4-hydroxy-3-methylbut-2-enyl diphosphate. [4Fe-4S] cluster is bound at residue C216. (2E)-4-hydroxy-3-methylbut-2-enyl diphosphate is bound by residues S244, S245, N246, and S289. 4 residues coordinate dimethylallyl diphosphate: S244, S245, N246, and S289. Residues S244, S245, N246, and S289 each coordinate isopentenyl diphosphate.

The protein belongs to the IspH family. Requires [4Fe-4S] cluster as cofactor.

The enzyme catalyses isopentenyl diphosphate + 2 oxidized [2Fe-2S]-[ferredoxin] + H2O = (2E)-4-hydroxy-3-methylbut-2-enyl diphosphate + 2 reduced [2Fe-2S]-[ferredoxin] + 2 H(+). It catalyses the reaction dimethylallyl diphosphate + 2 oxidized [2Fe-2S]-[ferredoxin] + H2O = (2E)-4-hydroxy-3-methylbut-2-enyl diphosphate + 2 reduced [2Fe-2S]-[ferredoxin] + 2 H(+). Its pathway is isoprenoid biosynthesis; dimethylallyl diphosphate biosynthesis; dimethylallyl diphosphate from (2E)-4-hydroxy-3-methylbutenyl diphosphate: step 1/1. It functions in the pathway isoprenoid biosynthesis; isopentenyl diphosphate biosynthesis via DXP pathway; isopentenyl diphosphate from 1-deoxy-D-xylulose 5-phosphate: step 6/6. Catalyzes the conversion of 1-hydroxy-2-methyl-2-(E)-butenyl 4-diphosphate (HMBPP) into a mixture of isopentenyl diphosphate (IPP) and dimethylallyl diphosphate (DMAPP). Acts in the terminal step of the DOXP/MEP pathway for isoprenoid precursor biosynthesis. The polypeptide is 4-hydroxy-3-methylbut-2-enyl diphosphate reductase (Mycolicibacterium paratuberculosis (strain ATCC BAA-968 / K-10) (Mycobacterium paratuberculosis)).